The sequence spans 189 residues: Small ribosomal subunit protein uS5 (189 aa).

One can recognise an S5 DRBM domain in the interval 22-85; the sequence is FVDKLVAINR…EAAKRDLIFV (64 aa).

This sequence belongs to the universal ribosomal protein uS5 family. Part of the 30S ribosomal subunit. Contacts proteins S4 and S8.

Functionally, with S4 and S12 plays an important role in translational accuracy. In terms of biological role, located at the back of the 30S subunit body where it stabilizes the conformation of the head with respect to the body. The polypeptide is Small ribosomal subunit protein uS5 (Sinorhizobium medicae (strain WSM419) (Ensifer medicae)).